Here is a 107-residue protein sequence, read N- to C-terminus: Putative double-stranded DNA mimic protein NTHI1680 (107 aa).

Belongs to the putative dsDNA mimic protein family.

May act as a double-stranded DNA (dsDNA) mimic. Probably regulates the activity of a dsDNA-binding protein. This chain is Putative double-stranded DNA mimic protein NTHI1680, found in Haemophilus influenzae (strain 86-028NP).